The chain runs to 404 residues: NADH-quinone oxidoreductase subunit D 1 (404 aa).

It belongs to the complex I 49 kDa subunit family. As to quaternary structure, NDH-1 is composed of 14 different subunits. Subunits NuoB, C, D, E, F, and G constitute the peripheral sector of the complex.

The protein resides in the cell membrane. The enzyme catalyses a quinone + NADH + 5 H(+)(in) = a quinol + NAD(+) + 4 H(+)(out). NDH-1 shuttles electrons from NADH, via FMN and iron-sulfur (Fe-S) centers, to quinones in the respiratory chain. The immediate electron acceptor for the enzyme in this species is believed to be a menaquinone. Couples the redox reaction to proton translocation (for every two electrons transferred, four hydrogen ions are translocated across the cytoplasmic membrane), and thus conserves the redox energy in a proton gradient. This Symbiobacterium thermophilum (strain DSM 24528 / JCM 14929 / IAM 14863 / T) protein is NADH-quinone oxidoreductase subunit D 1.